Consider the following 145-residue polypeptide: uncharacterized protein (145 aa).

Residues 16 to 36 (VLAYLLQLSASLVLPVAIWLI) form a helical membrane-spanning segment.

It is found in the mitochondrion membrane. This is an uncharacterized protein from Arabidopsis thaliana (Mouse-ear cress).